Reading from the N-terminus, the 352-residue chain is Phosphate acyltransferase (352 aa).

This sequence belongs to the PlsX family. In terms of assembly, homodimer. Probably interacts with PlsY.

Its subcellular location is the cytoplasm. The enzyme catalyses a fatty acyl-[ACP] + phosphate = an acyl phosphate + holo-[ACP]. It participates in lipid metabolism; phospholipid metabolism. Its function is as follows. Catalyzes the reversible formation of acyl-phosphate (acyl-PO(4)) from acyl-[acyl-carrier-protein] (acyl-ACP). This enzyme utilizes acyl-ACP as fatty acyl donor, but not acyl-CoA. In Bordetella bronchiseptica (strain ATCC BAA-588 / NCTC 13252 / RB50) (Alcaligenes bronchisepticus), this protein is Phosphate acyltransferase.